The following is a 163-amino-acid chain: Transcription elongation factor GreB (163 aa).

A coiled-coil region spans residues 54 to 76 (GKRRMREIDRRIRFLTKRLEAAV).

Belongs to the GreA/GreB family. GreB subfamily.

In terms of biological role, necessary for efficient RNA polymerase transcription elongation past template-encoded arresting sites. The arresting sites in DNA have the property of trapping a certain fraction of elongating RNA polymerases that pass through, resulting in locked ternary complexes. Cleavage of the nascent transcript by cleavage factors such as GreA or GreB allows the resumption of elongation from the new 3'terminus. GreB releases sequences of up to 9 nucleotides in length. This is Transcription elongation factor GreB from Neisseria meningitidis serogroup A / serotype 4A (strain DSM 15465 / Z2491).